Reading from the N-terminus, the 289-residue chain is tRNA pseudouridine synthase B (289 aa).

The Nucleophile role is filled by aspartate 55. The interval 243-289 (PGGVLAQHEREGSRALDSAAGNAEHDREEARIADNNREDRSRQHADR) is disordered. The span at 265 to 289 (AEHDREEARIADNNREDRSRQHADR) shows a compositional bias: basic and acidic residues.

Belongs to the pseudouridine synthase TruB family. Type 1 subfamily.

It carries out the reaction uridine(55) in tRNA = pseudouridine(55) in tRNA. Responsible for synthesis of pseudouridine from uracil-55 in the psi GC loop of transfer RNAs. The protein is tRNA pseudouridine synthase B of Chlorobium luteolum (strain DSM 273 / BCRC 81028 / 2530) (Pelodictyon luteolum).